A 232-amino-acid polypeptide reads, in one-letter code: ATP-dependent dethiobiotin synthetase BioD (232 aa).

An ATP-binding site is contributed by 16–21 (GVGKTV). Threonine 20 contacts Mg(2+). Lysine 41 is a catalytic residue. Residue threonine 45 coordinates substrate. ATP-binding positions include aspartate 52, 111 to 114 (EGIG), 171 to 172 (NQ), 200 to 202 (PLS), and glutamate 207. Residues aspartate 52 and glutamate 111 each coordinate Mg(2+).

The protein belongs to the dethiobiotin synthetase family. As to quaternary structure, homodimer. Mg(2+) serves as cofactor.

It localises to the cytoplasm. The enzyme catalyses (7R,8S)-7,8-diammoniononanoate + CO2 + ATP = (4R,5S)-dethiobiotin + ADP + phosphate + 3 H(+). It catalyses the reaction (7R,8S)-8-amino-7-(carboxyamino)nonanoate + ATP = (4R,5S)-dethiobiotin + ADP + phosphate + H(+). The protein operates within cofactor biosynthesis; biotin biosynthesis; biotin from 7,8-diaminononanoate: step 1/2. Catalyzes a mechanistically unusual reaction, the ATP-dependent insertion of CO2 between the N7 and N8 nitrogen atoms of 7,8-diaminopelargonic acid (DAPA, also called 7,8-diammoniononanoate) to form a ureido ring. This archaea does not encode bioA (which catalyzes the formation of the precursor for this reaction in the cannonical pathway), instead it encodes bioU, which replaces bioA and also performs the first half of the cannonical BioD reaction. Thus in this archaea BioD has a different substrate. The chain is ATP-dependent dethiobiotin synthetase BioD from Haloferax mediterranei (strain ATCC 33500 / DSM 1411 / JCM 8866 / NBRC 14739 / NCIMB 2177 / R-4) (Halobacterium mediterranei).